A 384-amino-acid chain; its full sequence is Eukaryotic translation initiation factor 3 subunit M (384 aa).

The region spanning 184–346 is the PCI domain; the sequence is ENRKAIEAMI…KKILITGAFP (163 aa).

Belongs to the eIF-3 subunit M family. As to quaternary structure, component of the eukaryotic translation initiation factor 3 (eIF-3) complex.

It is found in the cytoplasm. Its function is as follows. Component of the eukaryotic translation initiation factor 3 (eIF-3) complex, which is involved in protein synthesis of a specialized repertoire of mRNAs and, together with other initiation factors, stimulates binding of mRNA and methionyl-tRNAi to the 40S ribosome. The eIF-3 complex specifically targets and initiates translation of a subset of mRNAs involved in cell proliferation. The protein is Eukaryotic translation initiation factor 3 subunit M of Schistosoma japonicum (Blood fluke).